The sequence spans 354 residues: Sorbitol dehydrogenase (354 aa).

C43 provides a ligand contact to Zn(2+). Y49 is a binding site for substrate. Residues H67 and E68 each contribute to the Zn(2+) site. E153 is a substrate binding site. NAD(+)-binding residues include I181, D201, and R206. Residues S208 and S222 each carry the phosphoserine modification. NAD(+)-binding positions include 270–272 (VGL) and 294–296 (VFR). Substrate-binding residues include R296 and Y297.

This sequence belongs to the zinc-containing alcohol dehydrogenase family. Homotetramer. The cofactor is Zn(2+). Expressed in liver.

It is found in the mitochondrion membrane. Its subcellular location is the cell projection. The protein resides in the cilium. The protein localises to the flagellum. It carries out the reaction xylitol + NAD(+) = D-xylulose + NADH + H(+). It catalyses the reaction L-iditol + NAD(+) = keto-L-sorbose + NADH + H(+). The catalysed reaction is keto-D-fructose + NADH + H(+) = D-sorbitol + NAD(+). Polyol dehydrogenase that catalyzes the reversible NAD(+)-dependent oxidation of various sugar alcohols. Is mostly active with xylitol, L-iditol and D-sorbitol (D-glucitol) as substrates, leading to the C2-oxidized products D-xylulose, L-sorbose and D-fructose, respectively. Is a key enzyme in the polyol pathway that interconverts glucose and fructose via sorbitol, which constitutes an important alternate route for glucose metabolism. May play a role in sperm motility by using sorbitol as an alternative energy source for sperm motility. In Ovis aries (Sheep), this protein is Sorbitol dehydrogenase (SORD).